Reading from the N-terminus, the 181-residue chain is MNTKIRTDLILGSKRFSNYAWCFILMTGGIGFCLTGVGSYFNLHTILFVKFSDINFIPQGIVMMFYGTIAILFSLFLMYSIFTDVGGGYNKYDKEKKEIEIFRLGYNKKNKQMLLKYNFRDIKSIKIELKDDINPKREIYLVTKNKNQIPLTRIGEPLLLSDVENQAIELANFLNIPIEGI.

The next 2 membrane-spanning stretches (helical) occupy residues 19 to 41 (YAWC…GSYF) and 61 to 83 (IVMM…SIFT).

Belongs to the Ycf4 family.

The protein localises to the plastid. Its subcellular location is the chloroplast thylakoid membrane. In terms of biological role, seems to be required for the assembly of the photosystem I complex. This is Photosystem I assembly protein Ycf4 from Guillardia theta (Cryptophyte).